Reading from the N-terminus, the 517-residue chain is T-box transcription factor TBX5 (517 aa).

The interval 1–46 (MADADEGFGLARTPLEPDSKDRSCDSKPESALGAPSKSPSSPQAAF) is disordered. A compositionally biased stretch (basic and acidic residues) spans 15–28 (LEPDSKDRSCDSKP). Positions 34 to 45 (APSKSPSSPQAA) are enriched in low complexity. A DNA-binding region (T-box) is located at residues 58-238 (LHERELWLKF…NNPFAKGFRG (181 aa)). Disordered stretches follow at residues 270-313 (HSPF…YPLA) and 331-369 (SSTE…SYRT). A compositionally biased stretch (polar residues) spans 271–300 (SPFSSETRALSTSSNLGSQYQCENGVSGPS). Position 338 is an N6-acetyllysine (lysine 338). A compositionally biased stretch (polar residues) spans 357-369 (YPQQQGLSTSYRT).

As to quaternary structure, monomer. Homodimer (via the T-box); binds DNA as homodimer. Interacts (via the T-box) with NKX2-5 (via the homeobox); this complex binds DNA. Interacts with GATA4. Interacts with KAT2A and KAT2B. Post-translationally, acetylation at Lys-338 by KAT2A and KAT2B promotes nuclear retention.

The protein localises to the nucleus. The protein resides in the cytoplasm. DNA-binding protein that regulates the transcription of several genes and is involved in heart development and limb pattern formation. Binds to the core DNA motif of NPPA promoter. The chain is T-box transcription factor TBX5 (Tbx5) from Rattus norvegicus (Rat).